A 591-amino-acid chain; its full sequence is V-type ATP synthase alpha chain (591 aa).

233-240 (GPFGAGKT) lines the ATP pocket.

This sequence belongs to the ATPase alpha/beta chains family.

The enzyme catalyses ATP + H2O + 4 H(+)(in) = ADP + phosphate + 5 H(+)(out). Functionally, produces ATP from ADP in the presence of a proton gradient across the membrane. The V-type alpha chain is a catalytic subunit. The polypeptide is V-type ATP synthase alpha chain (Streptococcus pyogenes serotype M2 (strain MGAS10270)).